A 185-amino-acid chain; its full sequence is Large ribosomal subunit protein uL22 (185 aa).

This sequence belongs to the universal ribosomal protein uL22 family. As to quaternary structure, part of the 50S ribosomal subunit.

In terms of biological role, this protein binds specifically to 23S rRNA. It makes multiple contacts with different domains of the 23S rRNA in the assembled 50S subunit and ribosome. Functionally, the globular domain of the protein is located near the polypeptide exit tunnel on the outside of the subunit, while an extended beta-hairpin is found that lines the wall of the exit tunnel in the center of the 70S ribosome. The polypeptide is Large ribosomal subunit protein uL22 (Pyrobaculum islandicum (strain DSM 4184 / JCM 9189 / GEO3)).